Consider the following 349-residue polypeptide: Heat-inducible transcription repressor HrcA (349 aa).

The protein belongs to the HrcA family.

In terms of biological role, negative regulator of class I heat shock genes (grpE-dnaK-dnaJ and groELS operons). Prevents heat-shock induction of these operons. The chain is Heat-inducible transcription repressor HrcA from Xylella fastidiosa (strain M23).